We begin with the raw amino-acid sequence, 233 residues long: Probable dihydroorotate dehydrogenase B (NAD(+)), electron transfer subunit (233 aa).

Residues 1 to 87 form the FAD-binding FR-type domain; that stretch reads MYRVVTIEEV…RGPYGHGFIK (87 aa). [2Fe-2S] cluster contacts are provided by Cys202, Cys207, Cys210, and Cys218.

This sequence belongs to the PyrK family. As to quaternary structure, heterotetramer of 2 PyrK and 2 PyrD type B subunits. It depends on [2Fe-2S] cluster as a cofactor. The cofactor is FAD.

The protein operates within pyrimidine metabolism; UMP biosynthesis via de novo pathway; orotate from (S)-dihydroorotate (NAD(+) route): step 1/1. Responsible for channeling the electrons from the oxidation of dihydroorotate from the FMN redox center in the PyrD type B subunit to the ultimate electron acceptor NAD(+). This chain is Probable dihydroorotate dehydrogenase B (NAD(+)), electron transfer subunit, found in Thermococcus kodakarensis (strain ATCC BAA-918 / JCM 12380 / KOD1) (Pyrococcus kodakaraensis (strain KOD1)).